The following is a 470-amino-acid chain: ATP synthase subunit beta (470 aa).

Position 158–165 (158–165 (GGAGVGKT)) interacts with ATP.

Belongs to the ATPase alpha/beta chains family. As to quaternary structure, F-type ATPases have 2 components, CF(1) - the catalytic core - and CF(0) - the membrane proton channel. CF(1) has five subunits: alpha(3), beta(3), gamma(1), delta(1), epsilon(1). CF(0) has three main subunits: a(1), b(2) and c(9-12). The alpha and beta chains form an alternating ring which encloses part of the gamma chain. CF(1) is attached to CF(0) by a central stalk formed by the gamma and epsilon chains, while a peripheral stalk is formed by the delta and b chains.

The protein localises to the cell membrane. It catalyses the reaction ATP + H2O + 4 H(+)(in) = ADP + phosphate + 5 H(+)(out). Its function is as follows. Produces ATP from ADP in the presence of a proton gradient across the membrane. The catalytic sites are hosted primarily by the beta subunits. In Alkalihalophilus pseudofirmus (strain ATCC BAA-2126 / JCM 17055 / OF4) (Bacillus pseudofirmus), this protein is ATP synthase subunit beta.